Here is a 108-residue protein sequence, read N- to C-terminus: uncharacterized protein (108 aa).

At Thr56 the chain carries Phosphothreonine. Residues 89–108 form a disordered region; sequence AQAKGTEQAEALKKGTSKWF.

The protein resides in the cytoplasm. This is an uncharacterized protein from Schizosaccharomyces pombe (strain 972 / ATCC 24843) (Fission yeast).